The sequence spans 161 residues: Eukaryotic translation initiation factor 5A-2 (161 aa).

At Lys54 the chain carries Hypusine.

Belongs to the eIF-5A family. In terms of processing, lys-54 undergoes hypusination, a unique post-translational modification that consists in the addition of a butylamino group from spermidine to lysine side chain and leads to the formation of a hypusine residue. eIF-5As are the only known proteins to undergo this modification, which is essential for their function. In terms of tissue distribution, expressed in the somatic tissues.

The protein resides in the cytoplasm. Translation factor that promotes translation elongation and termination, particularly upon ribosome stalling at specific amino acid sequence contexts. Binds between the exit (E) and peptidyl (P) site of the ribosome and promotes rescue of stalled ribosome: specifically required for efficient translation of polyproline-containing peptides as well as other motifs that stall the ribosome. Acts as a ribosome quality control (RQC) cofactor by joining the RQC complex to facilitate peptidyl transfer during CAT tailing step. Acts in somatic tissues and its function in the soma is essential for normal growth and reproduction. This chain is Eukaryotic translation initiation factor 5A-2 (iff-2), found in Caenorhabditis elegans.